A 1229-amino-acid polypeptide reads, in one-letter code: Nuclear envelope pore membrane protein POM 121C (1229 aa).

Positions 1-10 (MSPAAAAAGA) are enriched in low complexity. Positions 1–24 (MSPAAAAAGAGERRRPIASVRDGR) are disordered. The cisternal side stretch occupies residues 1 to 40 (MSPAAAAAGAGERRRPIASVRDGRGRGCGGPAGAALLGLS). Positions 1–398 (MSPAAAAAGA…AITSSYSSTR (398 aa)) are required for targeting to the nucleus and nuclear pore complex. Basic and acidic residues predominate over residues 11 to 24 (GERRRPIASVRDGR). Residues 41-61 (LVGLLLYLVPAAAALAWLAVG) form a helical membrane-spanning segment. The tract at residues 62 to 1229 (TTAAWWGLSR…QARRQHTRKK (1168 aa)) is pore side. Position 81 is a phosphoserine (serine 81). Disordered stretches follow at residues 90–200 (RTLF…LPDR), 296–507 (KKKK…LGYS), 579–747 (KKMQ…TAPT), 936–966 (PLPS…ALTP), and 1202–1229 (PSFS…TRKK). Residues 155–166 (ARPAPRSTPPSQ) are compositionally biased toward pro residues. The span at 176-189 (PSLPTPLLRPSGRP) shows a compositional bias: low complexity. Residues serine 322, serine 328, serine 348, serine 370, and serine 373 each carry the phosphoserine modification. The segment covering 374 to 400 (LTGAYTSGIPSSSRNAITSSYSSTRGI) has biased composition (polar residues). Low complexity predominate over residues 409–422 (PSSSPFSSPASSRS). 2 stretches are compositionally biased toward basic and acidic residues: residues 427–439 (RPAK…ELCH) and 449–463 (ADKE…DTTP). The span at 468–479 (NSNSQSTPGSSG) shows a compositional bias: polar residues. A compositionally biased stretch (low complexity) spans 612 to 629 (PPLGLSQSGPPGLLPSPS). Over residues 660–673 (QAETATKPQATSAP) the composition is skewed to polar residues. 2 stretches are compositionally biased toward low complexity: residues 689–703 (SPSS…SASP) and 726–747 (SVSA…TAPT). Over residues 1219-1229 (LQARRQHTRKK) the composition is skewed to basic residues.

The protein belongs to the POM121 family.

The protein resides in the nucleus. The protein localises to the nuclear pore complex. It localises to the nucleus membrane. It is found in the endoplasmic reticulum membrane. Functionally, essential component of the nuclear pore complex (NPC). The repeat-containing domain may be involved in anchoring components of the pore complex to the pore membrane. When overexpressed in cells induces the formation of cytoplasmic annulate lamellae (AL). The chain is Nuclear envelope pore membrane protein POM 121C (POM121C) from Homo sapiens (Human).